A 425-amino-acid polypeptide reads, in one-letter code: Riboflavin biosynthesis protein RibBA (425 aa).

Residues 1-204 form a DHBP synthase region; it reads MTRLDSVERA…IADLIEWRRK (204 aa). D-ribulose 5-phosphate contacts are provided by residues 28 to 29, Asp-33, 141 to 145, and Glu-165; these read RE and RPGHT. Glu-29 lines the Mg(2+) pocket. His-144 contacts Mg(2+). Positions 205–425 are GTP cyclohydrolase II; it reads HEKHIERVAE…HLPGEFGGAL (221 aa). Residue 259–263 participates in GTP binding; it reads RVHSE. Zn(2+) is bound by residues Cys-264, Cys-275, and Cys-277. Residues Gln-280, 303 to 305, and Thr-325 contribute to the GTP site; that span reads EGR. Asp-337 (proton acceptor; for GTP cyclohydrolase activity) is an active-site residue. The Nucleophile; for GTP cyclohydrolase activity role is filled by Arg-339. The GTP site is built by Thr-360 and Lys-365.

The protein in the N-terminal section; belongs to the DHBP synthase family. It in the C-terminal section; belongs to the GTP cyclohydrolase II family. Mg(2+) serves as cofactor. It depends on Mn(2+) as a cofactor. The cofactor is Zn(2+).

The enzyme catalyses D-ribulose 5-phosphate = (2S)-2-hydroxy-3-oxobutyl phosphate + formate + H(+). The catalysed reaction is GTP + 4 H2O = 2,5-diamino-6-hydroxy-4-(5-phosphoribosylamino)-pyrimidine + formate + 2 phosphate + 3 H(+). Its pathway is cofactor biosynthesis; riboflavin biosynthesis; 2-hydroxy-3-oxobutyl phosphate from D-ribulose 5-phosphate: step 1/1. It functions in the pathway cofactor biosynthesis; riboflavin biosynthesis; 5-amino-6-(D-ribitylamino)uracil from GTP: step 1/4. Functionally, catalyzes the conversion of D-ribulose 5-phosphate to formate and 3,4-dihydroxy-2-butanone 4-phosphate. In terms of biological role, catalyzes the conversion of GTP to 2,5-diamino-6-ribosylamino-4(3H)-pyrimidinone 5'-phosphate (DARP), formate and pyrophosphate. The sequence is that of Riboflavin biosynthesis protein RibBA from Mycobacterium bovis (strain ATCC BAA-935 / AF2122/97).